Here is a 181-residue protein sequence, read N- to C-terminus: Ribosome-recycling factor (181 aa).

Residues 131-154 (RRDAMDSVKKEKEMPEDDVRKAEN) are disordered.

The protein belongs to the RRF family.

The protein resides in the cytoplasm. Its function is as follows. Responsible for the release of ribosomes from messenger RNA at the termination of protein biosynthesis. May increase the efficiency of translation by recycling ribosomes from one round of translation to another. This is Ribosome-recycling factor from Leuconostoc citreum (strain KM20).